The primary structure comprises 143 residues: MFLGTYTPKLDDKGRLTLPAKFRDALAGGLMVTKSQDHSLAVYPRSEFEQLARRASKAPRSNPEARAFLRNLAAGTDEQHPDSQGRITLSADHRRYAGLTKDCVVIGAVDYLEIWDAQAWHEYQQLHEENFSAASDEALGDIF.

SpoVT-AbrB domains are found at residues 5–47 and 76–119; these read TYTP…PRSE and TDEQ…DAQA.

This sequence belongs to the MraZ family. Forms oligomers.

It localises to the cytoplasm. It is found in the nucleoid. This is Transcriptional regulator MraZ from Mycobacterium ulcerans (strain Agy99).